A 1072-amino-acid polypeptide reads, in one-letter code: Guanylyl cyclase C (1072 aa).

A signal peptide spans methionine 1–alanine 22. The Extracellular segment spans residues serine 23–glutamine 429. Residues asparagine 31, asparagine 74, asparagine 78, asparagine 187, asparagine 194, asparagine 306, and asparagine 401 are each glycosylated (N-linked (GlcNAc...) asparagine). The helical transmembrane segment at isoleucine 430–leucine 453 threads the bilayer. At arginine 454–phenylalanine 1072 the chain is on the cytoplasmic side. Positions leucine 488–phenylalanine 748 constitute a Protein kinase domain. In terms of domain architecture, Guanylate cyclase spans threonine 823 to glutamate 953.

This sequence belongs to the adenylyl cyclase class-4/guanylyl cyclase family. As to quaternary structure, homotrimer. Interacts via its C-terminal region with PDZK2. Interacts with the lectin chaperone VIP36. Post-translationally, glycosylation at Asn-74 and/or Asn-78 is required for interaction with VIP36 while glycosylation at Asn-401 modulates ligand-mediated GC-C activation.

The protein localises to the cell membrane. The protein resides in the endoplasmic reticulum membrane. It carries out the reaction GTP = 3',5'-cyclic GMP + diphosphate. In terms of biological role, guanylyl cyclase that catalyzes synthesis of cyclic GMP (cGMP) from GTP. Receptor for the E.coli heat-stable enterotoxin; E.coli enterotoxin markedly stimulates the accumulation of cGMP in mammalian cells expressing GUCY2C. The chain is Guanylyl cyclase C (Gucy2c) from Rattus norvegicus (Rat).